The following is a 156-amino-acid chain: Small ribosomal subunit protein uS7 (156 aa).

Belongs to the universal ribosomal protein uS7 family. As to quaternary structure, part of the 30S ribosomal subunit. Contacts proteins S9 and S11.

Functionally, one of the primary rRNA binding proteins, it binds directly to 16S rRNA where it nucleates assembly of the head domain of the 30S subunit. Is located at the subunit interface close to the decoding center, probably blocks exit of the E-site tRNA. This chain is Small ribosomal subunit protein uS7, found in Lactobacillus delbrueckii subsp. bulgaricus (strain ATCC 11842 / DSM 20081 / BCRC 10696 / JCM 1002 / NBRC 13953 / NCIMB 11778 / NCTC 12712 / WDCM 00102 / Lb 14).